The sequence spans 133 residues: Ubiquitin-like FUBI-ribosomal protein eS30 fusion protein (133 aa).

In terms of domain architecture, Ubiquitin-like spans 1 to 74 (MQLFVRAQEL…LEVAGRMLGG (74 aa)). The residue at position 125 (K125) is an N6-succinyllysine.

It in the N-terminal section; belongs to the ubiquitin family. This sequence in the C-terminal section; belongs to the eukaryotic ribosomal protein eS30 family. Component of the 40S subunit of the ribosome. FUBI is cleaved from ribosomal protein S30 by the deubiquitinase USP36 before the assembly of ribosomal protein S30 into pre-40S ribosomal particles. FUBI removal from ribosomal protein S30 is a crucial event for the final maturation of pre-40S particles.

The protein localises to the cytoplasm. The protein resides in the nucleus. In terms of biological role, may have pro-apoptotic activity. Functionally, component of the 40S subunit of the ribosome. Contributes to the assembly and function of 40S ribosomal subunits. This is Ubiquitin-like FUBI-ribosomal protein eS30 fusion protein (FAU) from Oryctolagus cuniculus (Rabbit).